The chain runs to 336 residues: Glyoxylate reductase (336 aa).

NADP(+) is bound by residues 158-161 (FGRI), 180-182 (SRT), and 239-241 (IAR). Residues R241 and E270 contribute to the active site. The Proton donor role is filled by H288. 288-290 (HIG) contributes to the NADP(+) binding site.

This sequence belongs to the D-isomer specific 2-hydroxyacid dehydrogenase family. GyaR subfamily. In terms of assembly, homodimer.

It is found in the cytoplasm. The enzyme catalyses glycolate + NAD(+) = glyoxylate + NADH + H(+). In Pyrococcus furiosus (strain ATCC 43587 / DSM 3638 / JCM 8422 / Vc1), this protein is Glyoxylate reductase.